The primary structure comprises 1159 residues: WASH complex subunit 5 (1159 aa).

S917 carries the phosphoserine modification.

Belongs to the strumpellin family. In terms of assembly, component of the WASH core complex also described as WASH regulatory complex (SHRC) composed of WASH (WASHC1, WASH2P or WASH3P), WASHC2 (WASHC2A or WASHC2C), WASHC3, WASHC4 and WASHC5. The WASH core complex associates via WASHC2 with the F-actin-capping protein dimer (formed by CAPZA1, CAPZA2 or CAPZA3 and CAPZB) in a transient or substoichiometric manner which was initially described as WASH complex. Interacts with VCP, PI4K2A.

It localises to the cytoplasm. It is found in the cytosol. The protein localises to the endoplasmic reticulum. Its subcellular location is the early endosome. Its function is as follows. Acts as a component of the WASH core complex that functions as a nucleation-promoting factor (NPF) at the surface of endosomes, where it recruits and activates the Arp2/3 complex to induce actin polymerization, playing a key role in the fission of tubules that serve as transport intermediates during endosome sorting. May be involved in axonal outgrowth. Involved in cellular localization of ADRB2. Involved in cellular trafficking of BLOC-1 complex cargos such as ATP7A and VAMP7. The sequence is that of WASH complex subunit 5 from Pongo abelii (Sumatran orangutan).